A 497-amino-acid polypeptide reads, in one-letter code: C4-dicarboxylate transport protein (497 aa).

The next 8 helical transmembrane spans lie at 27-45, 60-82, 95-117, 168-185, 205-227, 237-259, 348-370, and 374-393; these read LYVQ…GYFY, IMLV…IAGM, AMIY…ANVV, ILQV…LAIV, RLVA…FTIG, LAML…LGAV, ILLL…AGFI, and ATLS…ILGI. The disordered stretch occupies residues 466-497; that stretch reads ADRTLAGRPGGRDSRRIAPDHSAQVFGGPLSL. The span at 475–484 shows a compositional bias: basic and acidic residues; sequence GGRDSRRIAP.

The protein belongs to the dicarboxylate/amino acid:cation symporter (DAACS) (TC 2.A.23) family.

It is found in the cell inner membrane. In terms of biological role, responsible for the transport of dicarboxylates such as succinate, fumarate, and malate from the periplasm across the inner membrane. This transport system plays an essential role in the energy supply of tropical rhizobium-legume symbionts. The protein is C4-dicarboxylate transport protein (dctA1) of Sinorhizobium fredii (strain NBRC 101917 / NGR234).